The chain runs to 126 residues: Glycine cleavage system H protein (126 aa).

The Lipoyl-binding domain maps to 21–103 (TVTVGISDHA…YESGWIARIK (83 aa)). Lysine 62 is modified (N6-lipoyllysine).

This sequence belongs to the GcvH family. In terms of assembly, the glycine cleavage system is composed of four proteins: P, T, L and H. It depends on (R)-lipoate as a cofactor.

Its function is as follows. The glycine cleavage system catalyzes the degradation of glycine. The H protein shuttles the methylamine group of glycine from the P protein to the T protein. The polypeptide is Glycine cleavage system H protein (Aliivibrio fischeri (strain MJ11) (Vibrio fischeri)).